We begin with the raw amino-acid sequence, 283 residues long: Pantothenate synthetase (283 aa).

30-37 (MGNLHDGH) contributes to the ATP binding site. Residue H37 is the Proton donor of the active site. Q61 lines the (R)-pantoate pocket. Q61 provides a ligand contact to beta-alanine. 149–152 (GEKD) contacts ATP. Q155 contacts (R)-pantoate. ATP is bound by residues V178 and 186–189 (LSSR).

Belongs to the pantothenate synthetase family. In terms of assembly, homodimer.

The protein localises to the cytoplasm. It carries out the reaction (R)-pantoate + beta-alanine + ATP = (R)-pantothenate + AMP + diphosphate + H(+). Its pathway is cofactor biosynthesis; (R)-pantothenate biosynthesis; (R)-pantothenate from (R)-pantoate and beta-alanine: step 1/1. Catalyzes the condensation of pantoate with beta-alanine in an ATP-dependent reaction via a pantoyl-adenylate intermediate. The sequence is that of Pantothenate synthetase from Salmonella arizonae (strain ATCC BAA-731 / CDC346-86 / RSK2980).